The chain runs to 402 residues: Cholinephosphotransferase 1 (402 aa).

The Cytoplasmic segment spans residues methionine 1–alanine 62. A helical membrane pass occupies residues proline 63–cysteine 83. Asparagine 64 is a CDP-choline binding site. At tyrosine 84–proline 93 the chain is on the lumenal side. Residues phenylalanine 94–alanine 118 traverse the membrane as a helical segment. Residues aspartate 111 and aspartate 114 each contribute to the Mg(2+) site. Arginine 119 contributes to the CDP-choline binding site. The Cytoplasmic portion of the chain corresponds to arginine 119 to serine 125. A helical transmembrane segment spans residues proline 126–alanine 150. Aspartate 132 provides a ligand contact to Mg(2+). Histidine 133 (proton acceptor) is an active-site residue. Aspartate 136 contributes to the Mg(2+) binding site. Residues valine 151 to methionine 160 are Lumenal-facing. A helical transmembrane segment spans residues phenylalanine 161 to tyrosine 179. Over valine 180–aspartate 190 the chain is Cytoplasmic. Residues valine 191 to valine 207 form a helical membrane-spanning segment. At cysteine 208 to leucine 222 the chain is on the lumenal side. A helical transmembrane segment spans residues proline 223–leucine 248. Residues serine 249–leucine 265 are Cytoplasmic-facing. A helical membrane pass occupies residues serine 266 to isoleucine 281. Residues tyrosine 282–asparagine 293 are Lumenal-facing. The chain crosses the membrane as a helical span at residues proline 294 to histidine 316. Over methionine 317–phenylalanine 329 the chain is Cytoplasmic. Residues isoleucine 330–glutamine 339 form a helical membrane-spanning segment. Over tyrosine 340–aspartate 346 the chain is Lumenal. Residues glutamate 347–histidine 376 form a helical membrane-spanning segment. The Cytoplasmic portion of the chain corresponds to leucine 377–aspartate 402.

The protein belongs to the CDP-alcohol phosphatidyltransferase class-I family. Homodimer. Requires Mg(2+) as cofactor. Mn(2+) is required as a cofactor.

It is found in the golgi apparatus membrane. The enzyme catalyses CDP-choline + a 1,2-diacyl-sn-glycerol = a 1,2-diacyl-sn-glycero-3-phosphocholine + CMP + H(+). It carries out the reaction 1,2-dioctanoyl-sn-glycerol + CDP-choline = 1,2-dioctanoyl-sn-glycero-3-phosphocholine + CMP + H(+). It catalyses the reaction 1-octadecanoyl-2-(5Z,8Z,11Z,14Z-eicosatetraenoyl)-sn-glycerol + CDP-choline = 1-octadecanoyl-2-(5Z,8Z,11Z,14Z-eicosatetraenoyl)-sn-glycero-3-phosphocholine + CMP + H(+). The catalysed reaction is 1-hexadecanoyl-2-(9Z-octadecenoyl)-sn-glycerol + CDP-choline = 1-hexadecanoyl-2-(9Z-octadecenoyl)-sn-glycero-3-phosphocholine + CMP + H(+). The enzyme catalyses 1-hexadecanoyl-2-(4Z,7Z,10Z,13Z,16Z,19Z-docosahexaenoyl)-sn-glycerol + CDP-choline = 1-hexadecanoyl-2-(4Z,7Z,10Z,13Z,16Z,19Z-docosahexaenoyl)-sn-glycero-3-phosphocholine + CMP + H(+). The protein operates within phospholipid metabolism; phosphatidylcholine biosynthesis; phosphatidylcholine from phosphocholine: step 2/2. Its function is as follows. Catalyzes the final step of de novo phosphatidylcholine (PC) synthesis, i.e. the transfer of choline phosphate from CDP-choline to the free hydroxyl of a diacylglycerol (DAG), producing a PC. It thereby plays a central role in the formation and maintenance of vesicular membranes. Shows a high preference for CDP-choline over CDP-ethanolamine as substrate. The chain is Cholinephosphotransferase 1 (chpt1) from Xenopus laevis (African clawed frog).